Here is a 391-residue protein sequence, read N- to C-terminus: Winged helix repair factor 1 (391 aa).

Composition is skewed to low complexity over residues 1 to 24 (MNIK…PSPI) and 49 to 63 (LSFN…SNIN). Residues 1-95 (MNIKRNQNNS…SITTTTATST (95 aa)) are disordered. The span at 64–74 (GEEDNDDDDRE) shows a compositional bias: acidic residues. The span at 82–95 (NPNPSITTTTATST) shows a compositional bias: low complexity.

This sequence belongs to the STK19 family.

The protein localises to the nucleus. DNA-binding protein which is required for efficient transcription-coupled nucleotide excision repair. This Dictyostelium discoideum (Social amoeba) protein is Winged helix repair factor 1.